Here is a 143-residue protein sequence, read N- to C-terminus: Large ribosomal subunit protein uL22c (143 aa).

Belongs to the universal ribosomal protein uL22 family. Part of the 50S ribosomal subunit.

It is found in the plastid. The protein localises to the chloroplast. Its function is as follows. This protein binds specifically to 23S rRNA. In terms of biological role, the globular domain of the protein is located near the polypeptide exit tunnel on the outside of the subunit, while an extended beta-hairpin is found that lines the wall of the exit tunnel in the center of the 70S ribosome. This Piper cenocladum (Ant piper) protein is Large ribosomal subunit protein uL22c (rpl22).